The sequence spans 420 residues: Serine--tRNA ligase (420 aa).

Residue 227–229 coordinates L-serine; it reads TSE. ATP-binding positions include 258 to 260 and valine 274; that span reads RRE. Glutamate 281 is a binding site for L-serine. Residue 345-348 coordinates ATP; the sequence is ELTS. Threonine 380 contacts L-serine.

The protein belongs to the class-II aminoacyl-tRNA synthetase family. Type-1 seryl-tRNA synthetase subfamily. In terms of assembly, homodimer. The tRNA molecule binds across the dimer.

Its subcellular location is the cytoplasm. It catalyses the reaction tRNA(Ser) + L-serine + ATP = L-seryl-tRNA(Ser) + AMP + diphosphate + H(+). The catalysed reaction is tRNA(Sec) + L-serine + ATP = L-seryl-tRNA(Sec) + AMP + diphosphate + H(+). It participates in aminoacyl-tRNA biosynthesis; selenocysteinyl-tRNA(Sec) biosynthesis; L-seryl-tRNA(Sec) from L-serine and tRNA(Sec): step 1/1. Its function is as follows. Catalyzes the attachment of serine to tRNA(Ser). Is also able to aminoacylate tRNA(Sec) with serine, to form the misacylated tRNA L-seryl-tRNA(Sec), which will be further converted into selenocysteinyl-tRNA(Sec). The sequence is that of Serine--tRNA ligase from Nocardia farcinica (strain IFM 10152).